Consider the following 85-residue polypeptide: Phosphocarrier protein HPr (85 aa).

The region spanning 1 to 85 (MFQQEVTITA…HLVKLMAELE (85 aa)) is the HPr domain. His15 functions as the Pros-phosphohistidine intermediate in the catalytic mechanism.

It belongs to the HPr family.

It localises to the cytoplasm. Its function is as follows. General (non sugar-specific) component of the phosphoenolpyruvate-dependent sugar phosphotransferase system (sugar PTS). This major carbohydrate active-transport system catalyzes the phosphorylation of incoming sugar substrates concomitantly with their translocation across the cell membrane. The phosphoryl group from phosphoenolpyruvate (PEP) is transferred to the phosphoryl carrier protein HPr by enzyme I. Phospho-HPr then transfers it to the PTS EIIA domain. This is Phosphocarrier protein HPr (ptsH) from Escherichia coli O157:H7.